Here is a 478-residue protein sequence, read N- to C-terminus: MSQSLSSASSSGAPQRVRTRFAPSPTGFIHLGNIRSALYPWAFARATGGDFILRIEDTDVERSSQAAVDVILEGMQWLGMEPDEGPFYQMQRMDRYKEVLAQMQAQGLVYPCYMSVAELDALRERQMQAKQKPRYDGTWRPEEGKTLPPVPEGVQPVLRFRNPVGGSVVWEDKVKGRIEIQNDELDDLVIARPDGTPTYNFCVVVDDIDMAITHVIRGDDHVNNTPRQINIFRALGKEPPVYAHLPTVLNEQGEKMSKRNGAKPVTQYRDEGYLPEAMVNYLARLGWSHGDDEIFSREQFLEWFDLDHLGRSAAQFDEAKLRWVNAQHLKATADERLAELVAPRLAARGIAQSELADGRLPRICALFKDRCDTLVALADWAHVFYGEVTPNEEERAKHVVDAVKPAIAALSDALAQCAWDKASIAAAFKEVLAAQGLKMPQLAMPVRVLTVGTAHTPSVDAVLELLGREKIAARLRTA.

The short motif at 23-33 (PSPTGFIHLGN) is the 'HIGH' region element. Basic and acidic residues predominate over residues 130-145 (KQKPRYDGTWRPEEGK). The tract at residues 130-153 (KQKPRYDGTWRPEEGKTLPPVPEG) is disordered. A 'KMSKS' region motif is present at residues 255-259 (KMSKR). Lys-258 is a binding site for ATP.

Belongs to the class-I aminoacyl-tRNA synthetase family. Glutamate--tRNA ligase type 1 subfamily. Monomer.

It is found in the cytoplasm. It catalyses the reaction tRNA(Glu) + L-glutamate + ATP = L-glutamyl-tRNA(Glu) + AMP + diphosphate. In terms of biological role, catalyzes the attachment of glutamate to tRNA(Glu) in a two-step reaction: glutamate is first activated by ATP to form Glu-AMP and then transferred to the acceptor end of tRNA(Glu). In Paracidovorax citrulli (strain AAC00-1) (Acidovorax citrulli), this protein is Glutamate--tRNA ligase.